The sequence spans 247 residues: Caffeoyl-CoA O-methyltransferase 2 (247 aa).

Lysine 21 serves as a coordination point for substrate. Residues threonine 63, glutamate 85, 87 to 88 (GV), serine 93, aspartate 111, and alanine 140 each bind S-adenosyl-L-methionine. Residue aspartate 163 coordinates substrate. Aspartate 163 serves as a coordination point for a divalent metal cation. Aspartate 165 provides a ligand contact to S-adenosyl-L-methionine. 2 residues coordinate a divalent metal cation: aspartate 189 and asparagine 190. Asparagine 194 lines the substrate pocket.

The protein belongs to the class I-like SAM-binding methyltransferase superfamily. Cation-dependent O-methyltransferase family. CCoAMT subfamily. The cofactor is a divalent metal cation.

It catalyses the reaction (E)-caffeoyl-CoA + S-adenosyl-L-methionine = (E)-feruloyl-CoA + S-adenosyl-L-homocysteine + H(+). It participates in aromatic compound metabolism; phenylpropanoid biosynthesis. Its function is as follows. Methylates caffeoyl-CoA to feruloyl-CoA and 5-hydroxyferuloyl-CoA to sinapoyl-CoA. Plays a role in the synthesis of feruloylated polysaccharides. Involved in the reinforcement of the plant cell wall. Also involved in the responding to wounding or pathogen challenge by the increased formation of cell wall-bound ferulic acid polymers. This chain is Caffeoyl-CoA O-methyltransferase 2 (CCOAOMT2), found in Populus trichocarpa (Western balsam poplar).